A 287-amino-acid polypeptide reads, in one-letter code: MTMMDMNFKYCHKIMKKHSKSFSYAFDLLPEDQRKAVWAIYAVCRKIDDSIDVYGDIQFLNQIKEDIQSIEKYPYEYHHFQSDRRIMMALQHVAQHKNIAFQSFYNLIDTVYKDQHFTMFETDAELFGYCYGVAGTVGEVLTPILSDHETHQTYDVARRLGESLQLINILRDVGEDFENERIYFSKQRLKQYEVDIAEVYQNGVNNHYIDLWEYYAAIAEKDFRDVMDQIKVFSIEAQPIIELAARIYIEILDEVRQANYTLHERVFVEKRKKAKLFHEINSKYHRI.

Residues 18-21 (HSKS), Tyr41, and Arg45 contribute to the (2E,6E)-farnesyl diphosphate site. Residues Asp48 and Asp52 each contribute to the Mg(2+) site. Residue Gln165 coordinates (2E,6E)-farnesyl diphosphate. Asn168 is a Mg(2+) binding site. Residue Arg171 participates in (2E,6E)-farnesyl diphosphate binding. Residue Asp172 participates in Mg(2+) binding. Tyr248 contributes to the (2E,6E)-farnesyl diphosphate binding site.

This sequence belongs to the phytoene/squalene synthase family. CrtM subfamily. Requires Mg(2+) as cofactor.

It catalyses the reaction 2 (2E,6E)-farnesyl diphosphate = 15-cis-4,4'-diapophytoene + 2 diphosphate. It participates in carotenoid biosynthesis; staphyloxanthin biosynthesis; staphyloxanthin from farnesyl diphosphate: step 1/5. In terms of biological role, involved in the biosynthesis of the yellow-orange carotenoid staphyloxanthin, which plays a role in the virulence via its protective function against oxidative stress. Catalyzes the head-to-head condensation of two molecules of farnesyl diphosphate (FPP) into the colorless C(30) carotenoid 4,4'-diapophytoene (dehydrosqualene). The polypeptide is 4,4'-diapophytoene synthase (Staphylococcus aureus).